Reading from the N-terminus, the 334-residue chain is Inositol 2-dehydrogenase (334 aa).

Belongs to the Gfo/Idh/MocA family. In terms of assembly, homotetramer.

It carries out the reaction myo-inositol + NAD(+) = scyllo-inosose + NADH + H(+). In terms of biological role, involved in the oxidation of myo-inositol (MI) to 2-keto-myo-inositol (2KMI or 2-inosose). The chain is Inositol 2-dehydrogenase from Cereibacter sphaeroides (strain ATCC 17029 / ATH 2.4.9) (Rhodobacter sphaeroides).